Consider the following 421-residue polypeptide: Na(+)/H(+) antiporter NhaA 1 (421 aa).

11 helical membrane passes run 48 to 68 (SSGL…NSPW), 93 to 113 (LYWW…GLEI), 129 to 149 (SLAL…YTLV), 157 to 177 (AGWG…LALL), 187 to 207 (VLLA…IALF), 215 to 235 (LALG…AAGV), 253 to 273 (LASG…IPLG), 299 to 319 (FLIL…GGSL), 326 to 346 (VVLG…WLAV), 364 to 384 (GLGL…GLAF), and 392 to 412 (AAKL…ITVL).

The protein belongs to the NhaA Na(+)/H(+) (TC 2.A.33) antiporter family.

Its subcellular location is the cell membrane. It carries out the reaction Na(+)(in) + 2 H(+)(out) = Na(+)(out) + 2 H(+)(in). Na(+)/H(+) antiporter that extrudes sodium in exchange for external protons. This chain is Na(+)/H(+) antiporter NhaA 1, found in Deinococcus geothermalis (strain DSM 11300 / CIP 105573 / AG-3a).